A 94-amino-acid polypeptide reads, in one-letter code: Integration host factor subunit beta (94 aa).

The protein belongs to the bacterial histone-like protein family. As to quaternary structure, heterodimer of an alpha and a beta chain.

Functionally, this protein is one of the two subunits of integration host factor, a specific DNA-binding protein that functions in genetic recombination as well as in transcriptional and translational control. This chain is Integration host factor subunit beta, found in Dechloromonas aromatica (strain RCB).